The sequence spans 71 residues: Small ribosomal subunit protein bS21 (71 aa).

Residues R47–Y71 form a disordered region. Over residues V60–Y71 the composition is skewed to basic and acidic residues.

Belongs to the bacterial ribosomal protein bS21 family.

The chain is Small ribosomal subunit protein bS21 from Histophilus somni (strain 129Pt) (Haemophilus somnus).